The primary structure comprises 634 residues: Ras and EF-hand domain-containing protein homolog (634 aa).

2 EF-hand domains span residues 5-33 and 33-68; these read DVENLFSLCDSESKGFLTMEDLKKVCPQL and LDDNDLRFIFNELDRDGSGKIEKMEFLQGFQETVQH. Residues D46, D48, S50, K52, and E57 each contribute to the Ca(2+) site. Residues 169–310 are a coiled coil; that stretch reads LSEKKHENER…RADFDQKQDE (142 aa). Disordered stretches follow at residues 216-237 and 308-328; these read ERERLTKEKEEMRERMSEEMSE and QDELSARRDQASHATEESESV. GTP contacts are provided by residues 449–454, 552–555, and 585–586; these read AVGKSS, NKVD, and AL. The propeptide at 632–634 is removed in mature form; the sequence is RGS.

It belongs to the small GTPase superfamily. Rab family. As to quaternary structure, homodimer.

It is found in the cytoplasm. Its subcellular location is the perinuclear region. In terms of biological role, binds GTP and GDP. Plays a role in uterine seam cell development. This chain is Ras and EF-hand domain-containing protein homolog, found in Caenorhabditis briggsae.